The following is a 192-amino-acid chain: Probable nicotinate-nucleotide adenylyltransferase (192 aa).

This sequence belongs to the NadD family.

The enzyme catalyses nicotinate beta-D-ribonucleotide + ATP + H(+) = deamido-NAD(+) + diphosphate. Its pathway is cofactor biosynthesis; NAD(+) biosynthesis; deamido-NAD(+) from nicotinate D-ribonucleotide: step 1/1. Catalyzes the reversible adenylation of nicotinate mononucleotide (NaMN) to nicotinic acid adenine dinucleotide (NaAD). The polypeptide is Probable nicotinate-nucleotide adenylyltransferase (Rhizobium etli (strain ATCC 51251 / DSM 11541 / JCM 21823 / NBRC 15573 / CFN 42)).